We begin with the raw amino-acid sequence, 306 residues long: Bifunctional protein FolD (306 aa).

NADP(+)-binding positions include 169–171 (GRS), serine 194, and isoleucine 235.

This sequence belongs to the tetrahydrofolate dehydrogenase/cyclohydrolase family. In terms of assembly, homodimer.

It carries out the reaction (6R)-5,10-methylene-5,6,7,8-tetrahydrofolate + NADP(+) = (6R)-5,10-methenyltetrahydrofolate + NADPH. It catalyses the reaction (6R)-5,10-methenyltetrahydrofolate + H2O = (6R)-10-formyltetrahydrofolate + H(+). It functions in the pathway one-carbon metabolism; tetrahydrofolate interconversion. In terms of biological role, catalyzes the oxidation of 5,10-methylenetetrahydrofolate to 5,10-methenyltetrahydrofolate and then the hydrolysis of 5,10-methenyltetrahydrofolate to 10-formyltetrahydrofolate. The protein is Bifunctional protein FolD of Thermosynechococcus vestitus (strain NIES-2133 / IAM M-273 / BP-1).